We begin with the raw amino-acid sequence, 380 residues long: Cytochrome b (380 aa).

4 consecutive transmembrane segments (helical) span residues 34 to 54 (FGSL…LLAM), 78 to 99 (WLIR…YLHI), 114 to 134 (WNTG…GYVL), and 179 to 199 (FFAL…IHLT). 2 residues coordinate heme b: His-84 and His-98. Heme b-binding residues include His-183 and His-197. His-202 contacts a ubiquinone. The next 4 membrane-spanning stretches (helical) occupy residues 227–247 (LKDA…ALFS), 289–309 (LGGV…PLLH), 321–341 (LSQL…WIGS), and 348–368 (FIII…ILFP).

The protein belongs to the cytochrome b family. The cytochrome bc1 complex contains 11 subunits: 3 respiratory subunits (MT-CYB, CYC1 and UQCRFS1), 2 core proteins (UQCRC1 and UQCRC2) and 6 low-molecular weight proteins (UQCRH/QCR6, UQCRB/QCR7, UQCRQ/QCR8, UQCR10/QCR9, UQCR11/QCR10 and a cleavage product of UQCRFS1). This cytochrome bc1 complex then forms a dimer. The cofactor is heme b.

It localises to the mitochondrion inner membrane. Its function is as follows. Component of the ubiquinol-cytochrome c reductase complex (complex III or cytochrome b-c1 complex) that is part of the mitochondrial respiratory chain. The b-c1 complex mediates electron transfer from ubiquinol to cytochrome c. Contributes to the generation of a proton gradient across the mitochondrial membrane that is then used for ATP synthesis. The protein is Cytochrome b (MT-CYB) of Oceanodroma tethys (Wedge-rumped storm-petrel).